Consider the following 79-residue polypeptide: MSAPDKEKEKEKEETNNKSEDLGLLEEDDEFEEFPAEDFRVGDDEEELNVWEDNWDDDNVEDDFSQQLKAHLESKKMET.

A compositionally biased stretch (basic and acidic residues) spans 1–21 (MSAPDKEKEKEKEETNNKSED). Residues 1 to 30 (MSAPDKEKEKEKEETNNKSEDLGLLEEDDE) form a disordered region. Serine 19 is modified (phosphoserine).

Belongs to the DSS1/SEM1 family. Part of the 26S proteasome.

In terms of biological role, subunit of the 26S proteasome which plays a role in ubiquitin-dependent proteolysis. This chain is Probable 26S proteasome complex subunit sem1, found in Drosophila melanogaster (Fruit fly).